We begin with the raw amino-acid sequence, 64 residues long: Anti-sigma-G factor Gin (64 aa).

Residues C11, C14, C30, and C33 each contribute to the Zn(2+) site.

Probably functions as a homodimer. Interacts with sigma-G factor, recognition occurs via the first 71 residues of sigma-G. Zn(2+) serves as cofactor.

Functionally, an anti-sigma-G factor, prevents premature activation of sigma-G factor in the forespore; overexpression leads to 1000-fold reduction in spore formation, spore formation stops after engulfment. Overexpression also inhibits sigma-G transcription activation activity. When both Gin and sigma-G are expressed in E.coli Gin inhibits sigma-G, strongly suggesting Gin inhibits by direct physical interaction. This Bacillus subtilis (strain 168) protein is Anti-sigma-G factor Gin.